Reading from the N-terminus, the 1389-residue chain is DNA-directed RNA polymerase subunit beta'' (1389 aa).

C220, C290, C297, and C300 together coordinate Zn(2+).

This sequence belongs to the RNA polymerase beta' chain family. RpoC2 subfamily. In plastids the minimal PEP RNA polymerase catalytic core is composed of four subunits: alpha, beta, beta', and beta''. When a (nuclear-encoded) sigma factor is associated with the core the holoenzyme is formed, which can initiate transcription. Zn(2+) is required as a cofactor.

The protein localises to the plastid. The protein resides in the chloroplast. It carries out the reaction RNA(n) + a ribonucleoside 5'-triphosphate = RNA(n+1) + diphosphate. Its function is as follows. DNA-dependent RNA polymerase catalyzes the transcription of DNA into RNA using the four ribonucleoside triphosphates as substrates. The protein is DNA-directed RNA polymerase subunit beta'' of Chloranthus spicatus (Chulantree).